A 547-amino-acid polypeptide reads, in one-letter code: Rho GTPase-activating protein 36 (547 aa).

A signal peptide spans 1 to 40; sequence MGGCIPFLKAARALCPRIMPPLLLLSAFIFLVSVLGGAPG. In terms of domain architecture, Rho-GAP spans 226-426; sequence MSLNPIAKQI…AMIDNWDVLF (201 aa). The segment at 485-547 is disordered; it reads AVLAQSKPSD…AKTGVSYFFP (63 aa). Over residues 524–539 the composition is skewed to basic and acidic residues; the sequence is EQDRPLLRVPREKEAK.

In terms of assembly, may interacts (via the Rho-GAP domain) with the active form of RAC1. Detected in the outer root sheath of hair follicles at the level of the stem cell bulge, during the anagen and telogen phases of hair growth (at protein level).

Its function is as follows. GTPase activator for the Rho-type GTPases by converting them to an inactive GDP-bound state. This is Rho GTPase-activating protein 36 (ARHGAP36) from Homo sapiens (Human).